We begin with the raw amino-acid sequence, 455 residues long: MLPSQSPAIFTVSRLNQTVRLLLEHEMGQVWISGEISNFTQPASGHWYFTLKDDNAQVRCAMFRNSNRRVTFRPQHGQQVLVRANITLYEPRGDYQIIVESMQPAGEGLLQQKYEQLKAKLQAEGLFDQQLKKTLPSPAHCVGVITSKTGAALHDILHVLKRRDPSLPVIIYPTAVQGDDAPGQIVRAIELANLRNECDVLIVGRGGGSLEDLWSFNDERVARGIFASRIPVVSAVGHETDVTIADFVADLRAPTPSAAAEVVSRNQQELLRQVQSAQQRLEMAMDYYLANRTRRFTQIHHRLQQQHPQLRLARQQTTLERLQKRMSFALENQLKRAGQQQQRLTLRLNQQNPQPKIHRAQTRVQQLEYRLAENLRAQLSAMRERFGNTVTHLEAVSPLSTLARGYSVTSAADGAVLKQVKQVKVGETLTTRLGDGVVISEVSAVTKSRKPRKKN.

Belongs to the XseA family. As to quaternary structure, heterooligomer composed of large and small subunits.

The protein resides in the cytoplasm. The enzyme catalyses Exonucleolytic cleavage in either 5'- to 3'- or 3'- to 5'-direction to yield nucleoside 5'-phosphates.. Bidirectionally degrades single-stranded DNA into large acid-insoluble oligonucleotides, which are then degraded further into small acid-soluble oligonucleotides. The protein is Exodeoxyribonuclease 7 large subunit of Escherichia fergusonii (strain ATCC 35469 / DSM 13698 / CCUG 18766 / IAM 14443 / JCM 21226 / LMG 7866 / NBRC 102419 / NCTC 12128 / CDC 0568-73).